Here is a 443-residue protein sequence, read N- to C-terminus: MGQTPTIAINHLGCEKNRIDSEHMLGLLVEAGYQVDANEELADYVIVNTCSFIQDARQESVRTLVELAEAKKKIVISGCLAQHFQEQLLEEIPEAVAVVGTGDYQNIVDIIRRTEQGQRVKAISPNPSFIADENLPRYRTTNEAIAYLRVAEGCDYRCAFCIIPQLRGKQRSRPIESIVAEAEQLASQGVKELILISQITTNYGLDLYGEPKLAELLQALGKVDIPWIRIHYAYPTGLTPKVIEAIRDTPNVLPYLDLPLQHSHPDILRAMNRPWQGQVNDDIITRLKTALPDAVLRTTFIVGFPGETEEHFGHLLDFVQRHQFDHVGVFTFSPEEGTAAFDLPNAVPEEVMGDRRDRLMALQQPISAQKNAACLGQTLDVLIEQENPSTGEFIGRSTRFAPEVDGLVYVKGNANLNEIVPVVITATDDYDLYGMTAEEAKVF.

Residues 5–116 (PTIAINHLGC…IVDIIRRTEQ (112 aa)) enclose the MTTase N-terminal domain. The [4Fe-4S] cluster site is built by Cys14, Cys50, Cys79, Cys154, Cys158, and Cys161. The 230-residue stretch at 140–369 (TTNEAIAYLR…MALQQPISAQ (230 aa)) folds into the Radical SAM core domain. Residues 372-438 (AACLGQTLDV…DYDLYGMTAE (67 aa)) enclose the TRAM domain.

The protein belongs to the methylthiotransferase family. RimO subfamily. Requires [4Fe-4S] cluster as cofactor.

Its subcellular location is the cytoplasm. The enzyme catalyses L-aspartate(89)-[ribosomal protein uS12]-hydrogen + (sulfur carrier)-SH + AH2 + 2 S-adenosyl-L-methionine = 3-methylsulfanyl-L-aspartate(89)-[ribosomal protein uS12]-hydrogen + (sulfur carrier)-H + 5'-deoxyadenosine + L-methionine + A + S-adenosyl-L-homocysteine + 2 H(+). In terms of biological role, catalyzes the methylthiolation of an aspartic acid residue of ribosomal protein uS12. This chain is Ribosomal protein uS12 methylthiotransferase RimO, found in Synechocystis sp. (strain ATCC 27184 / PCC 6803 / Kazusa).